A 582-amino-acid polypeptide reads, in one-letter code: Vesicular glutamate transporter 2 (582 aa).

Residues Met1 to Tyr71 lie on the Cytoplasmic side of the membrane. The chain crosses the membrane as a helical span at residues Ile72 to Gly92. Topologically, residues Val93–Gly125 are vesicular. 2 N-linked (GlcNAc...) asparagine glycosylation sites follow: Asn100 and Asn101. Residues Met126–Ala146 traverse the membrane as a helical segment. The Cytoplasmic segment spans residues Ser147 to Arg148. Residues Leu149–Ile169 form a helical membrane-spanning segment. The Vesicular portion of the chain corresponds to Pro170–Tyr177. The helical transmembrane segment at Gly178 to Cys198 threads the bilayer. Residues His199 to Thr216 lie on the Cytoplasmic side of the membrane. A helical transmembrane segment spans residues Thr217–Val237. Residues Gln238 to Ser244 lie on the Vesicular side of the membrane. The chain crosses the membrane as a helical span at residues Val245–Tyr265. At Glu266–Met310 the chain is on the cytoplasmic side. Residues Pro311–Ile331 traverse the membrane as a helical segment. At Ser332–Gly349 the chain is on the vesicular side. The chain crosses the membrane as a helical span at residues Met350 to Ala370. Topologically, residues Asp371–Lys386 are cytoplasmic. Residues Ile387–His407 form a helical membrane-spanning segment. The Vesicular segment spans residues Thr408–Arg409. The helical transmembrane segment at Gly410 to Phe430 threads the bilayer. Residues Asn431 to Ser443 lie on the Cytoplasmic side of the membrane. A helical membrane pass occupies residues Ile444 to Val464. The Vesicular portion of the chain corresponds to Gly465–Gln477. An N-linked (GlcNAc...) asparagine glycan is attached at Asn470. A helical membrane pass occupies residues Tyr478 to Ala498. The Cytoplasmic segment spans residues Ser499–Ser582.

This sequence belongs to the major facilitator superfamily. Sodium/anion cotransporter family. VGLUT subfamily. As to expression, predominantly expressed in adult brain. Expressed in amygdala, caudate nucleus, cerebral cortex, frontal lobe, hippocampus, medulla, occipital lobe, putamen, spinal cord, substantia nigra, subthalamic nucleus, temporal lobe and thalamus.

Its subcellular location is the cytoplasmic vesicle. The protein resides in the secretory vesicle. It is found in the synaptic vesicle membrane. The protein localises to the synapse. It localises to the synaptosome. Its subcellular location is the cell membrane. The enzyme catalyses L-glutamate(out) = L-glutamate(in). The catalysed reaction is 3 Na(+)(out) + phosphate(out) = 3 Na(+)(in) + phosphate(in). It catalyses the reaction phosphate(in) = phosphate(out). It carries out the reaction K(+)(in) + H(+)(out) = K(+)(out) + H(+)(in). The enzyme catalyses chloride(in) = chloride(out). With respect to regulation, chloride channel activity is allosterically activated by lumenal H(+) and Cl(-) leading to synaptic vesicles acidification. The L-glutamate transport activity is allosterically activated by lumenal H(+) and Cl(-). The allosteric requirement for H(+) efficiently prevents non-vesicular efflux across the plasma membrane. The L-glutamate uniporter activity exhibits a biphasic dependence on chloride concentration. Multifunctional transporter that transports L-glutamate as well as multiple ions such as chloride, proton, potassium, sodium and phosphate. At the synaptic vesicle membrane, mainly functions as a uniporter which transports preferentially L-glutamate but also, phosphate from the cytoplasm into synaptic vesicles at presynaptic nerve terminals of excitatory neural cells. The L-glutamate or phosphate uniporter activity is electrogenic and is driven by the proton electrochemical gradient, mainly by the electrical gradient established by the vacuolar H(+)-ATPase across the synaptic vesicle membrane. In addition, functions as a chloride channel that allows the chloride permeation through the synaptic vesicle membrane therefore affects the proton electrochemical gradient and promotes synaptic vesicles acidification. Moreover, functions as a vesicular K(+)/H(+) antiport allowing to maintain the electrical gradient and to decrease chemical gradient and therefore sustain vesicular glutamate uptake. The vesicular H(+)/H(+) antiport activity is electroneutral. At the plasma membrane, following exocytosis, functions as a symporter of Na(+) and phosphate from the extracellular space to the cytoplasm allowing synaptic phosphate homeostasis regulation. The symporter activity is driven by an inside negative membrane potential and is electrogenic. Also involved in the regulation of retinal hyaloid vessel regression during postnatal development. May also play a role in the endocrine glutamatergic system of other tissues such as pineal gland and pancreas. This is Vesicular glutamate transporter 2 from Homo sapiens (Human).